The primary structure comprises 323 residues: Aldo-keto reductase family 1 member C1 (323 aa).

NADP(+)-binding positions include 20-24 (GFGTY) and D50. Y24 provides a ligand contact to substrate. The active-site Proton donor is Y55. A substrate-binding site is contributed by H117. NADP(+) is bound by residues 166–167 (SN), Q190, and 216–222 (YSALGSH). Substrate contacts are provided by H222 and W227. 270–280 (KSYNEQRIREN) serves as a coordination point for NADP(+).

This sequence belongs to the aldo/keto reductase family. As to quaternary structure, monomer. Expressed in liver, adrenal gland, intestine and kidney.

It is found in the cytoplasm. The protein localises to the cytosol. It carries out the reaction a 3alpha-hydroxysteroid + NADP(+) = a 3-oxosteroid + NADPH + H(+). The catalysed reaction is a 3alpha-hydroxysteroid + NAD(+) = a 3-oxosteroid + NADH + H(+). The enzyme catalyses (17R,20S)-17,20-dihydroxypregn-4-en-3-one + NADP(+) = 17alpha-hydroxyprogesterone + NADPH + H(+). It catalyses the reaction (17R,20S)-17,20-dihydroxypregn-4-en-3-one + NAD(+) = 17alpha-hydroxyprogesterone + NADH + H(+). It carries out the reaction (20S)-hydroxypregn-4-en-3-one + NADP(+) = progesterone + NADPH + H(+). The catalysed reaction is (20S)-hydroxypregn-4-en-3-one + NAD(+) = progesterone + NADH + H(+). The enzyme catalyses (1R,2R)-1,2-dihydrobenzene-1,2-diol + NADP(+) = catechol + NADPH + H(+). It catalyses the reaction (S)-indan-1-ol + NAD(+) = indan-1-one + NADH + H(+). It carries out the reaction (S)-indan-1-ol + NADP(+) = indan-1-one + NADPH + H(+). The catalysed reaction is 5alpha-androstane-3alpha,17beta-diol + NADP(+) = 17beta-hydroxy-5alpha-androstan-3-one + NADPH + H(+). The enzyme catalyses 5alpha-androstane-3beta,17beta-diol + NADP(+) = 17beta-hydroxy-5alpha-androstan-3-one + NADPH + H(+). It catalyses the reaction 5alpha-androstane-3alpha,17beta-diol + NAD(+) = 17beta-hydroxy-5alpha-androstan-3-one + NADH + H(+). It carries out the reaction 17beta-hydroxy-5alpha-androstan-3-one + NADP(+) = 5alpha-androstan-3,17-dione + NADPH + H(+). The catalysed reaction is androsterone + NADP(+) = 5alpha-androstan-3,17-dione + NADPH + H(+). The enzyme catalyses androsterone + NADPH + H(+) = 5alpha-androstane-3alpha,17beta-diol + NADP(+). It catalyses the reaction 5alpha-androstane-3alpha,17beta-diol + NAD(+) = androsterone + NADH + H(+). It carries out the reaction 17beta-estradiol + NADP(+) = estrone + NADPH + H(+). The catalysed reaction is 17beta-estradiol + NAD(+) = estrone + NADH + H(+). The enzyme catalyses testosterone + NADP(+) = androst-4-ene-3,17-dione + NADPH + H(+). It catalyses the reaction 20alpha-hydroxy-5beta-pregnan-3-one + NADP(+) = 5beta-pregnan-3,20-dione + NADPH + H(+). It carries out the reaction 3beta-hydroxy-5beta-pregnane-20-one + NADP(+) = 5beta-pregnan-3,20-dione + NADPH + H(+). The catalysed reaction is 3beta-hydroxy-5beta-pregnane-20-one + NADPH + H(+) = 3beta,20alpha-dihydroxy-5beta-pregnane + NADP(+). The enzyme catalyses (3beta,5alpha,17beta)-3-hydroxyandrostan-17-yl sulfate + NADP(+) = 5alpha-dihydrotestosterone sulfate + NADPH + H(+). Its pathway is steroid metabolism. Its function is as follows. Cytosolic aldo-keto reductase that catalyzes the NADH and NADPH-dependent reduction of ketosteroids to hydroxysteroids. Most probably acts as a reductase in vivo since the oxidase activity measured in vitro is inhibited by physiological concentrations of NADPH. Displays a broad positional specificity acting on positions 3, 17 and 20 of steroids and regulates the metabolism of hormones like estrogens and androgens. May also reduce conjugated steroids such as 5alpha-dihydrotestosterone sulfate. Displays affinity for bile acids. The chain is Aldo-keto reductase family 1 member C1 (AKR1C1) from Macaca fuscata fuscata (Japanese macaque).